The chain runs to 142 residues: Large ribosomal subunit protein uL13 (142 aa).

The protein belongs to the universal ribosomal protein uL13 family. Part of the 50S ribosomal subunit.

This protein is one of the early assembly proteins of the 50S ribosomal subunit, although it is not seen to bind rRNA by itself. It is important during the early stages of 50S assembly. In Alkalilimnicola ehrlichii (strain ATCC BAA-1101 / DSM 17681 / MLHE-1), this protein is Large ribosomal subunit protein uL13.